Consider the following 233-residue polypeptide: Phosphatidylserine decarboxylase proenzyme (233 aa).

The active-site Schiff-base intermediate with substrate; via pyruvic acid is the serine 188. Serine 188 carries the post-translational modification Pyruvic acid (Ser); by autocatalysis.

This sequence belongs to the phosphatidylserine decarboxylase family. PSD-A subfamily. As to quaternary structure, heterodimer of a large membrane-associated beta subunit and a small pyruvoyl-containing alpha subunit. Pyruvate serves as cofactor. Is synthesized initially as an inactive proenzyme. Formation of the active enzyme involves a self-maturation process in which the active site pyruvoyl group is generated from an internal serine residue via an autocatalytic post-translational modification. Two non-identical subunits are generated from the proenzyme in this reaction, and the pyruvate is formed at the N-terminus of the alpha chain, which is derived from the carboxyl end of the proenzyme. The post-translation cleavage follows an unusual pathway, termed non-hydrolytic serinolysis, in which the side chain hydroxyl group of the serine supplies its oxygen atom to form the C-terminus of the beta chain, while the remainder of the serine residue undergoes an oxidative deamination to produce ammonia and the pyruvoyl prosthetic group on the alpha chain.

The protein localises to the cell membrane. The enzyme catalyses a 1,2-diacyl-sn-glycero-3-phospho-L-serine + H(+) = a 1,2-diacyl-sn-glycero-3-phosphoethanolamine + CO2. It functions in the pathway phospholipid metabolism; phosphatidylethanolamine biosynthesis; phosphatidylethanolamine from CDP-diacylglycerol: step 2/2. In terms of biological role, catalyzes the formation of phosphatidylethanolamine (PtdEtn) from phosphatidylserine (PtdSer). The sequence is that of Phosphatidylserine decarboxylase proenzyme from Ruegeria sp. (strain TM1040) (Silicibacter sp.).